The sequence spans 92 residues: UPF0250 protein PD_0532 (92 aa).

This sequence belongs to the UPF0250 family.

The sequence is that of UPF0250 protein PD_0532 from Xylella fastidiosa (strain Temecula1 / ATCC 700964).